Reading from the N-terminus, the 182-residue chain is Large ribosomal subunit protein uL5 (182 aa).

It belongs to the universal ribosomal protein uL5 family. As to quaternary structure, part of the 50S ribosomal subunit; part of the 5S rRNA/L5/L18/L25 subcomplex. Contacts the 5S rRNA and the P site tRNA. Forms a bridge to the 30S subunit in the 70S ribosome.

Functionally, this is one of the proteins that bind and probably mediate the attachment of the 5S RNA into the large ribosomal subunit, where it forms part of the central protuberance. In the 70S ribosome it contacts protein S13 of the 30S subunit (bridge B1b), connecting the 2 subunits; this bridge is implicated in subunit movement. Contacts the P site tRNA; the 5S rRNA and some of its associated proteins might help stabilize positioning of ribosome-bound tRNAs. The sequence is that of Large ribosomal subunit protein uL5 from Trichormus variabilis (strain ATCC 29413 / PCC 7937) (Anabaena variabilis).